Reading from the N-terminus, the 87-residue chain is Sec-independent protein translocase protein TatA (87 aa).

The chain crosses the membrane as a helical span at residues Met-1–Gly-21. A disordered region spans residues Asn-54–Val-87.

It belongs to the TatA/E family. In terms of assembly, the Tat system comprises two distinct complexes: a TatABC complex, containing multiple copies of TatA, TatB and TatC subunits, and a separate TatA complex, containing only TatA subunits. Substrates initially bind to the TatABC complex, which probably triggers association of the separate TatA complex to form the active translocon.

Its subcellular location is the cell inner membrane. Functionally, part of the twin-arginine translocation (Tat) system that transports large folded proteins containing a characteristic twin-arginine motif in their signal peptide across membranes. TatA could form the protein-conducting channel of the Tat system. This is Sec-independent protein translocase protein TatA from Photobacterium profundum (strain SS9).